The primary structure comprises 71 residues: SRY-related protein LG28 (71 aa).

Positions 1–68 form a DNA-binding region, HMG box; that stretch reads VKRPMNAFMV…KHMADYPDYK (68 aa).

The protein resides in the nucleus. The sequence is that of SRY-related protein LG28 from Eublepharis macularius (Leopard gecko).